The chain runs to 557 residues: Dihydroxy-acid dehydratase (557 aa).

D78 contributes to the Mg(2+) binding site. C119 contributes to the [2Fe-2S] cluster binding site. Mg(2+)-binding residues include D120 and K121. Residue K121 is modified to N6-carboxylysine. A [2Fe-2S] cluster-binding site is contributed by C192. E442 is a binding site for Mg(2+). Residue S468 is the Proton acceptor of the active site.

Belongs to the IlvD/Edd family. Homodimer. It depends on [2Fe-2S] cluster as a cofactor. Mg(2+) serves as cofactor.

The enzyme catalyses (2R)-2,3-dihydroxy-3-methylbutanoate = 3-methyl-2-oxobutanoate + H2O. It catalyses the reaction (2R,3R)-2,3-dihydroxy-3-methylpentanoate = (S)-3-methyl-2-oxopentanoate + H2O. It functions in the pathway amino-acid biosynthesis; L-isoleucine biosynthesis; L-isoleucine from 2-oxobutanoate: step 3/4. It participates in amino-acid biosynthesis; L-valine biosynthesis; L-valine from pyruvate: step 3/4. Its function is as follows. Functions in the biosynthesis of branched-chain amino acids. Catalyzes the dehydration of (2R,3R)-2,3-dihydroxy-3-methylpentanoate (2,3-dihydroxy-3-methylvalerate) into 2-oxo-3-methylpentanoate (2-oxo-3-methylvalerate) and of (2R)-2,3-dihydroxy-3-methylbutanoate (2,3-dihydroxyisovalerate) into 2-oxo-3-methylbutanoate (2-oxoisovalerate), the penultimate precursor to L-isoleucine and L-valine, respectively. The sequence is that of Dihydroxy-acid dehydratase from Bacillus cereus (strain 03BB102).